Here is a 66-residue protein sequence, read N- to C-terminus: MAKGKDVRVTVILECTSCVRNSVDKVSRGISRYITQKNRHNTPNRLELKKFCPYCYKHTIHGEIKK.

The protein belongs to the bacterial ribosomal protein bL33 family.

Its subcellular location is the plastid. It localises to the chloroplast. This is Large ribosomal subunit protein bL33c from Nicotiana sylvestris (Wood tobacco).